Consider the following 105-residue polypeptide: Ketoisovalerate oxidoreductase subunit VorD (105 aa).

4Fe-4S ferredoxin-type domains follow at residues 44–73 (FKPVVNEEKCVKCYICWKYCPEPAIYIKPD) and 74–103 (GYVAIDYDYCKGCGICANECPTKAITMIKE). Residues Cys53, Cys56, Cys59, Cys63, Cys83, Cys86, Cys89, and Cys93 each coordinate [4Fe-4S] cluster.

As to quaternary structure, heterotetramer of one alpha, one beta, one delta and one gamma chain. The cofactor is [4Fe-4S] cluster.

It catalyses the reaction 3-methyl-2-oxobutanoate + 2 oxidized [2Fe-2S]-[ferredoxin] + CoA = 2-methylpropanoyl-CoA + 2 reduced [2Fe-2S]-[ferredoxin] + CO2 + H(+). In Pyrococcus furiosus (strain ATCC 43587 / DSM 3638 / JCM 8422 / Vc1), this protein is Ketoisovalerate oxidoreductase subunit VorD (vorD).